We begin with the raw amino-acid sequence, 153 residues long: Transcriptional repressor NrdR (153 aa).

A zinc finger spans residues 3–34; that stretch reads CPSCFHNGTRVLDSRPVDEGRSIRRRRECESC. The ATP-cone domain maps to 49-139; it reads LIVVKKEGTR…VYRQFKDLNV (91 aa).

The protein belongs to the NrdR family. The cofactor is Zn(2+).

In terms of biological role, negatively regulates transcription of bacterial ribonucleotide reductase nrd genes and operons by binding to NrdR-boxes. In Bacillus cytotoxicus (strain DSM 22905 / CIP 110041 / 391-98 / NVH 391-98), this protein is Transcriptional repressor NrdR.